Reading from the N-terminus, the 270-residue chain is Glutamate 5-kinase (270 aa).

Position 18 (K18) interacts with ATP. Substrate contacts are provided by S54, D141, and N153. Residue 173-174 (SD) participates in ATP binding.

Belongs to the glutamate 5-kinase family.

It localises to the cytoplasm. It catalyses the reaction L-glutamate + ATP = L-glutamyl 5-phosphate + ADP. Its pathway is amino-acid biosynthesis; L-proline biosynthesis; L-glutamate 5-semialdehyde from L-glutamate: step 1/2. In terms of biological role, catalyzes the transfer of a phosphate group to glutamate to form L-glutamate 5-phosphate. In Leifsonia xyli subsp. xyli (strain CTCB07), this protein is Glutamate 5-kinase.